The following is a 351-amino-acid chain: Photosystem II D2 protein (351 aa).

Residues 39–59 (TAYLAIGGWLTGTTFVTSWYT) traverse the membrane as a helical segment. H116 contacts chlorophyll a. Residues 123–139 (GFMLRQFEISRLVGIRP) traverse the membrane as a helical segment. Pheophytin a-binding residues include Q128 and N141. Residues 151-164 (VFVSVFLIYPLGQS) form a helical membrane-spanning segment. H196 lines the chlorophyll a pocket. A helical membrane pass occupies residues 206–226 (GALLSAIHGVTVENTLYEDGE). The a plastoquinone site is built by H213 and F260. Residue H213 coordinates Fe cation. Residue H267 coordinates Fe cation. The chain crosses the membrane as a helical span at residues 277–293 (GLWTSSIGIIGLALNLR).

Belongs to the reaction center PufL/M/PsbA/D family. PSII is composed of 1 copy each of membrane proteins PsbA, PsbB, PsbC, PsbD, PsbE, PsbF, PsbH, PsbI, PsbJ, PsbK, PsbL, PsbM, PsbT, PsbX, PsbY, PsbZ, Psb30/Ycf12, peripheral proteins PsbO, CyanoQ (PsbQ), PsbU, PsbV and a large number of cofactors. It forms dimeric complexes. The D1/D2 heterodimer binds P680, chlorophylls that are the primary electron donor of PSII, and subsequent electron acceptors. It shares a non-heme iron and each subunit binds pheophytin, quinone, additional chlorophylls, carotenoids and lipids. There is also a Cl(-1) ion associated with D1 and D2, which is required for oxygen evolution. The PSII complex binds additional chlorophylls, carotenoids and specific lipids. is required as a cofactor.

It is found in the host cellular thylakoid membrane. It catalyses the reaction 2 a plastoquinone + 4 hnu + 2 H2O = 2 a plastoquinol + O2. Its function is as follows. Photosystem II (PSII) is a light-driven water:plastoquinone oxidoreductase that uses light energy to abstract electrons from H(2)O, generating O(2) and a proton gradient subsequently used for ATP formation. It consists of a core antenna complex that captures photons, and an electron transfer chain that converts photonic excitation into a charge separation. The D1/D2 (PsbA/PsbD) reaction center heterodimer binds P680, the primary electron donor of PSII as well as several subsequent electron acceptors. D2 is needed for assembly of a stable PSII complex. In Synechococcus, this protein is Photosystem II D2 protein (psbD).